The chain runs to 54 residues: Photoreceptor disk component PRCD (54 aa).

Residue Cys2 is the site of S-palmitoyl cysteine attachment. Residues 25–54 are disordered; sequence PEPSDVDGAARGSSLDADPQSSGREKEPLK.

The protein belongs to the PRCD family. Interacts with RHO/rhodopsin; the interaction promotes PRCD stability. Post-translationally, palmitoylated at Cys-2. Palmitoylation is essential for protein stability and trafficking to the photoreceptor outer segment, but does not appear to be essential for membrane localization. Probably palmitoylated by ZDHHC3. In terms of processing, phosphorylated.

It localises to the cell projection. Its subcellular location is the cilium. The protein localises to the photoreceptor outer segment. It is found in the membrane. The protein resides in the endoplasmic reticulum. It localises to the golgi apparatus. Functionally, involved in vision. The protein is Photoreceptor disk component PRCD of Homo sapiens (Human).